An 858-amino-acid chain; its full sequence is Envelope glycoprotein gp160 (858 aa).

The signal sequence occupies residues Met1 to Cys19. The Extracellular portion of the chain corresponds to Thr20–Tyr679. Residue Asn34 is glycosylated (N-linked (GlcNAc...) asparagine; by host). Cys41 and Cys54 form a disulfide bridge. 26 N-linked (GlcNAc...) asparagine; by host glycosylation sites follow: Asn67, Asn76, Asn119, Asn120, Asn151, Asn166, Asn179, Asn192, Asn193, Asn196, Asn206, Asn238, Asn241, Asn248, Asn272, Asn278, Asn289, Asn300, Asn310, Asn367, Asn371, Asn400, Asn410, Asn447, Asn463, and Asn466. 5 disulfides stabilise this stretch: Cys98–Cys214, Cys105–Cys205, Cys110–Cys163, Cys227–Cys257, and Cys237–Cys249. The segment at Cys110–Asn162 is V1. Over residues Ser111–Thr134 the composition is skewed to low complexity. Positions Ser111–Glu142 are disordered. The tract at residues Cys163–Cys205 is V2. The segment at Cys305–Trp339 is V3. Cys305 and Cys340 are disulfide-bonded. Disulfide bonds link Cys392–Cys446 and Cys399–Cys419. Residues Cys399–Cys419 form a V4 region. The segment at Asn462–Phe469 is V5. Positions Gly512 to Ala532 are fusion peptide. Residues Leu575 to Arg591 form an immunosuppression region. N-linked (GlcNAc...) asparagine; by host glycans are attached at residues Asn611, Asn620, and Asn636. A coiled-coil region spans residues Gln624 to Gln645. The interval Lys657–Gln678 is MPER; binding to GalCer. The chain crosses the membrane as a helical span at residues Gly680 to Leu700. Over Ser701 to Leu858 the chain is Cytoplasmic. The YXXV motif; contains endocytosis signal motif lies at Tyr707 to Val710. Cys773 is lipidated: S-palmitoyl cysteine; by host. The Di-leucine internalization motif signature appears at Leu857 to Leu858.

The mature envelope protein (Env) consists of a homotrimer of non-covalently associated gp120-gp41 heterodimers. The resulting complex protrudes from the virus surface as a spike. There seems to be as few as 10 spikes on the average virion. Interacts with human CD4, CCR5 and CXCR4, to form a P4HB/PDI-CD4-CXCR4-gp120 complex. Gp120 also interacts with the C-type lectins CD209/DC-SIGN and CLEC4M/DC-SIGNR (collectively referred to as DC-SIGN(R)). Gp120 and gp41 interact with GalCer. As to quaternary structure, the mature envelope protein (Env) consists of a homotrimer of non-covalently associated gp120-gp41 heterodimers. The resulting complex protrudes from the virus surface as a spike. There seems to be as few as 10 spikes on the average virion. Specific enzymatic cleavages in vivo yield mature proteins. Envelope glycoproteins are synthesized as an inactive precursor that is heavily N-glycosylated and processed likely by host cell furin in the Golgi to yield the mature SU and TM proteins. The cleavage site between SU and TM requires the minimal sequence [KR]-X-[KR]-R. In terms of processing, palmitoylation of the transmembrane protein and of Env polyprotein (prior to its proteolytic cleavage) is essential for their association with host cell membrane lipid rafts. Palmitoylation is therefore required for envelope trafficking to classical lipid rafts, but not for viral replication.

The protein localises to the virion membrane. Its subcellular location is the host cell membrane. It is found in the host endosome membrane. Its function is as follows. The surface protein gp120 (SU) attaches the virus to the host lymphoid cell by binding to the primary receptor CD4. This interaction induces a structural rearrangement creating a high affinity binding site for a chemokine coreceptor like CXCR4 and/or CCR5. This peculiar 2 stage receptor-interaction strategy allows gp120 to maintain the highly conserved coreceptor-binding site in a cryptic conformation, protected from neutralizing antibodies. Since CD4 also displays a binding site for the disulfide-isomerase P4HB/PDI, a P4HB/PDI-CD4-CXCR4-gp120 complex may form. In that complex, P4HB/PDI could reach and reduce gp120 disulfide bonds, causing major conformational changes in gp120. TXN, another PDI family member could also be involved in disulfide rearrangements in Env during fusion. These changes are transmitted to the transmembrane protein gp41 and are thought to activate its fusogenic potential by unmasking its fusion peptide. In terms of biological role, the surface protein gp120 is a ligand for CD209/DC-SIGN and CLEC4M/DC-SIGNR, which are respectively found on dendritic cells (DCs), and on endothelial cells of liver sinusoids and lymph node sinuses. These interactions allow capture of viral particles at mucosal surfaces by these cells and subsequent transmission to permissive cells. DCs are professional antigen presenting cells, critical for host immunity by inducing specific immune responses against a broad variety of pathogens. They act as sentinels in various tissues where they take up antigen, process it, and present it to T-cells following migration to lymphoid organs. HIV subverts the migration properties of dendritic cells to gain access to CD4+ T-cells in lymph nodes. Virus transmission to permissive T-cells occurs either in trans (without DCs infection, through viral capture and transmission), or in cis (following DCs productive infection, through the usual CD4-gp120 interaction), thereby inducing a robust infection. In trans infection, bound virions remain infectious over days and it is proposed that they are not degraded, but protected in non-lysosomal acidic organelles within the DCs close to the cell membrane thus contributing to the viral infectious potential during DCs' migration from the periphery to the lymphoid tissues. On arrival at lymphoid tissues, intact virions recycle back to DCs' cell surface allowing virus transmission to CD4+ T-cells. Virion capture also seems to lead to MHC-II-restricted viral antigen presentation, and probably to the activation of HIV-specific CD4+ cells. The transmembrane protein gp41 (TM) acts as a class I viral fusion protein. Under the current model, the protein has at least 3 conformational states: pre-fusion native state, pre-hairpin intermediate state, and post-fusion hairpin state. During fusion of viral and target intracellular membranes, the coiled coil regions (heptad repeats) assume a trimer-of-hairpins structure, positioning the fusion peptide in close proximity to the C-terminal region of the ectodomain. The formation of this structure appears to drive apposition and subsequent fusion of viral and target cell membranes. Complete fusion occurs in host cell endosomes and is dynamin-dependent, however some lipid transfer might occur at the plasma membrane. The virus undergoes clathrin-dependent internalization long before endosomal fusion, thus minimizing the surface exposure of conserved viral epitopes during fusion and reducing the efficacy of inhibitors targeting these epitopes. Membranes fusion leads to delivery of the nucleocapsid into the cytoplasm. Functionally, the envelope glycoprotein gp160 precursor down-modulates cell surface CD4 antigen by interacting with it in the endoplasmic reticulum and blocking its transport to the cell surface. Its function is as follows. The gp120-gp41 heterodimer seems to contribute to T-cell depletion during HIV-1 infection. The envelope glycoproteins expressed on the surface of infected cells induce apoptosis through an interaction with uninfected cells expressing the receptor (CD4) and the coreceptors CXCR4 or CCR5. This type of bystander killing may be obtained by at least three distinct mechanisms. First, the interaction between the 2 cells can induce cellular fusion followed by nuclear fusion within the syncytium. Syncytia are condemned to die from apoptosis. Second, the 2 interacting cells may not fuse entirely and simply exchange plasma membrane lipids, after a sort of hemifusion process, followed by rapid death. Third, it is possible that virus-infected cells, on the point of undergoing apoptosis, fuse with CD4-expressing cells, in which case apoptosis is rapidly transmitted from one cell to the other and thus occurs in a sort of contagious fashion. In terms of biological role, the gp120-gp41 heterodimer allows rapid transcytosis of the virus through CD4 negative cells such as simple epithelial monolayers of the intestinal, rectal and endocervical epithelial barriers. Both gp120 and gp41 specifically recognize glycosphingolipids galactosyl-ceramide (GalCer) or 3' sulfo-galactosyl-ceramide (GalS) present in the lipid rafts structures of epithelial cells. Binding to these alternative receptors allows the rapid transcytosis of the virus through the epithelial cells. This transcytotic vesicle-mediated transport of virions from the apical side to the basolateral side of the epithelial cells does not involve infection of the cells themselves. The chain is Envelope glycoprotein gp160 (env) from Homo sapiens (Human).